The sequence spans 7071 residues: Replicase polyprotein 1ab (7071 aa).

Residues 12–127 (THVQLSLPVL…YRNVLLRKNG (116 aa)) enclose the CoV Nsp1 globular domain. In terms of domain architecture, BetaCoV Nsp1 C-terminal spans 148–179 (ELGTDPIEDYEQNWNTKHGSGVLRELTRELNG). Residues 183–456 (TRYVDNNFCG…NEDLLEILSR (274 aa)) enclose the CoV Nsp2 N-terminal domain. Residues C200, C231, H234, H236, C323, C326, C341, C344, C370, C373, H382, and C416 each coordinate Zn(2+). The C2H2 stretch occupies residues 200–236 (CIKDLLARAGKSMCTLSEQLDYIESKRGVYCCRDHGH). Residues 323–344 (CNHCDEVSWQTCDFLKATCEQC) are C4. The segment at 370–416 (CPACQDPEIGPEHSAADYHNHSNIETRLRKGGRTRCFGGCVFAYVGC) is C2HC. The CoV Nsp2 middle domain maps to 458-688 (RVNINIVGDF…VDVVNKALEM (231 aa)). Residues 690–818 (IDQVTIAGAK…TNNVFRLKGG (129 aa)) form the CoV Nsp2 C-terminal domain. The region spanning 822 to 930 (KGVTFGEDTV…MYCSFYPPDE (109 aa)) is the Ubiquitin-like 1 domain. 3 Macro domains span residues 1001 to 1167 (VNQL…MDYL), 1205 to 1333 (KIKA…LPSE), and 1341 to 1468 (ILGT…TSSS). The DPUP domain maps to 1470-1536 (TSEDHFVETV…PLDKLKSLLS (67 aa)). The 56-residue stretch at 1540 to 1595 (VKTIKVFTTVDNTNLHTQLVDMSMTYGQQLGPTYLEGADVTKIKPHVNHEGKTFFV) folds into the Ubiquitin-like 2 domain. The Peptidase C16 domain maps to 1609 to 1873 (YYHTLDESFL…YTEIEPKLDG (265 aa)). C1649 serves as the catalytic For PL-PRO activity. Zn(2+) is bound by residues C1727, C1730, C1762, and C1764. A C4-type zinc finger spans residues 1727-1764 (CKHCGQKTTTLTGVEAVMYMGTLSYDNLKMGVSIPCVC). Active-site for PL-PRO activity residues include H1810 and D1824. Positions 1886 to 1996 (PIDLIPTQPL…CLWSTKPVDT (111 aa)) constitute a Nucleic acid-binding domain. Positions 2021–2130 (PTPEEVVENP…LGQAAVTTSN (110 aa)) constitute a G2M domain. Residues 2201-2221 (LFTIAMWLLLLSICLGSLIYV) form a helical membrane-spanning segment. The HD1 stretch occupies residues 2201–2369 (LFTIAMWLLL…IFFASFYYIW (169 aa)). The region spanning 2222–2292 (TAALGVLLSN…QVTISSYKLD (71 aa)) is the 3Ecto domain. Intrachain disulfides connect C2238–C2266 and C2257–C2263. 2 consecutive transmembrane segments (helical) span residues 2312–2334 (FFYL…SHFI) and 2349–2369 (MAPV…YYIW). Residues 2370-2460 (KSYVHIMDGC…QFKRPINPTD (91 aa)) form a Y1 region. A CoV Nsp3 Y domain is found at 2370-2738 (KSYVHIMDGC…ITTKISLKGG (369 aa)). Zn(2+) is bound by residues H2374, C2379, C2384, C2387, C2420, H2423, C2427, and C2430. The ZF1 stretch occupies residues 2374–2387 (HIMDGCTSSTCMMC). The tract at residues 2420–2430 (CKTHNWNCLNC) is ZF2. A Y2 region spans residues 2461–2555 (QSSYVVDSVA…LLDQALVSDV (95 aa)). The segment at 2461–2738 (QSSYVVDSVA…ITTKISLKGG (278 aa)) is coV-Y. Residues 2556–2637 (GDSTEVSVKM…ECLKLSHHSD (82 aa)) form a Y3 region. Residues 2638-2738 (LEVTGDSCNN…ITTKISLKGG (101 aa)) form a Y4 region. The next 6 helical transmembrane spans lie at 2753-2773 (LLCV…ILSV), 3020-3040 (ASVV…YYFM), 3059-3079 (LFLM…LPGV), 3081-3101 (SVFY…LAHL), 3103-3123 (WFAM…VFCI), and 3140-3160 (VVFN…TFLL). An HD2 region spans residues 2753–3160 (LLCVLAALVC…EEAALCTFLL (408 aa)). Residues 3140 to 3238 (VVFNGVTFST…QTSITSAVLQ (99 aa)) form the Nsp4C domain. The 306-residue stretch at 3239 to 3544 (SGFRKMAFPS…VRQCSGVTFQ (306 aa)) folds into the Peptidase C30 domain. Residues H3279 and C3383 each act as for 3CL-PRO activity in the active site. The next 7 helical transmembrane spans lie at 3562 to 3582 (FLTS…FFVY), 3584 to 3604 (NAFL…MLLV), 3610 to 3630 (FLCL…MVYM), 3657 to 3676 (CVMY…RTVY), 3683 to 3702 (VWTL…GNAL), 3726 to 3746 (IMFL…LLFI), and 3754 to 3774 (IMLV…LFCL). The HD3 stretch occupies residues 3562–3774 (FLTSLLILVQ…CCCYFGLFCL (213 aa)). Residues 3835-3917 (SKMSDVKCTS…EMLDNRATLQ (83 aa)) enclose the RdRp Nsp7 cofactor domain. One can recognise a RdRp Nsp8 cofactor domain in the interval 3918-4115 (AIASEFSSLP…LRANSAVKLQ (198 aa)). A Nsp9 ssRNA-binding domain is found at 4116–4228 (NNELSPVALR…GSLAATVRLQ (113 aa)). In terms of domain architecture, ExoN/MTase coactivator spans 4229 to 4367 (AGNATEVPAN…CDQLREPMMQ (139 aa)). Residues C4302, C4305, H4311, C4318, C4345, C4348, C4356, and C4358 each coordinate Zn(2+). Zinc fingers lie at residues 4302–4318 (CLYC…KGFC) and 4345–4358 (CTVC…GCSC). A NiRAN domain is found at 4374–4628 (FLNRVCGVSA…AAESHMDADL (255 aa)). Mn(2+)-binding residues include N4576 and D4585. Residues 4633–4731 (IKWDLLKYDF…HNQDVNLHSS (99 aa)) enclose the Nsp12 Interface domain. Positions 4662, 4668, 4673, 4677, and 4854 each coordinate Zn(2+). In terms of domain architecture, Nsp12 RNA-dependent RNA polymerase spans 4732–5299 (RLSFKELLVY…AMYTPHTVLQ (568 aa)). The rdRp Fingers N-ter stretch occupies residues 4734 to 4948 (SFKELLVYAA…HQKLLKSIAA (215 aa)). The segment at 4949-4987 (TRGATVVIGTSKFYGGWHNMLKTVYSDVETPHLMGWDYP) is rdRp Palm N-ter. In terms of domain architecture, RdRp catalytic spans 4979 to 5141 (PHLMGWDYPK…CYNSNYAAQG (163 aa)). The interval 4988–5046 (KCDRAMPNMLRIMASLVLARKHSTCCNLSHRFYRLANECAQVLSEMVMCGGSLYVKPGG) is rdRp Fingers C-ter. Residues H5009, C5012, and C5013 each coordinate Zn(2+). The interval 5047-5182 (TSSGDATTAY…TKGPHEFCSQ (136 aa)) is rdRp Palm C-ter. Active-site residues include S5126, D5127, and D5128. The tract at residues 5183 to 5299 (HTMLVKQGDD…AMYTPHTVLQ (117 aa)) is rdRp Thumb. Positions 5300–5412 (AVGACVLCNS…TDFNAIATCD (113 aa)) constitute a CV ZBD domain. Residues C5304, C5307, C5315, C5318, C5325, C5328, H5332, H5338, C5349, C5354, C5371, and H5374 each contribute to the Zn(2+) site. Residues 5556 to 5737 (NISDEFSSNV…MKTIGPDMFL (182 aa)) form the (+)RNA virus helicase ATP-binding domain. 5581–5588 (GPPGTGKS) serves as a coordination point for ATP. Residues 5738–5907 (GTCRRCPAEI…TLQAENVTGL (170 aa)) enclose the (+)RNA virus helicase C-terminal domain. Residues 5972-6187 (MFITREEAIR…RCLAVHECFV (216 aa)) enclose the ExoN domain. Active-site residues include D5990, E5992, and E6091. Zn(2+)-binding residues include C6107, C6110, C6126, H6129, H6157, C6161, and H6164. Catalysis depends on residues H6168 and D6173. Zn(2+) is bound at residue C6179. The 232-residue stretch at 6196–6427 (YPIIGDELKI…NLWNTFTRLQ (232 aa)) folds into the N7-MTase domain. S-adenosyl-L-methionine is bound at residue 6231 to 6237 (DIGNPKA). Positions 6314 to 6328 (CDGGSLYVNKHAFHT) are gpppA-binding. Zn(2+)-binding residues include C6352, C6373, C6384, and H6387. In terms of domain architecture, Nsp15 N-terminal oligomerization spans 6428–6488 (SLENVAYNVV…NVAFELWAKR (61 aa)). The 126-residue stretch at 6489–6614 (NIKSVPEIKI…YFKKVDGIIQ (126 aa)) folds into the AV-Nsp11N/CoV-Nsp15M domain. The region spanning 6631–6770 (KPRSQMETDF…KDGHVETFYP (140 aa)) is the NendoU domain. Active-site residues include H6661, H6676, K6716, K6819, D6903, K6943, and E6976. The 295-residue stretch at 6775 to 7069 (SQAWQPGVAM…RVVVSSDILV (295 aa)) folds into the Nidovirus-type SAM-dependent 2'-O-MTase domain.

It belongs to the coronaviruses polyprotein 1ab family. Interacts with host PHB and PHB2. As to quaternary structure, interacts with papain-like protease nsp3 and non-structural protein 6. In terms of assembly, monomer. Homodimer. Only the homodimer shows catalytic activity. Interacts with nsp8 and nsp12 to form the replication-transcription complex (RTC): nsp12, nsp7, two subunits of nsp8, and up to two subunits of nsp13. As to quaternary structure, interacts with nsp7, nsp13 and nsp12 to form the replication-transcription complex (RTC): nsp12, nsp7, two subunits of nsp8, and up to two subunits of nsp13. In terms of assembly, interacts with nsp12. Interacts with proofreading exoribonuclease nsp14 and 2'-O-methyltransferase nsp16; these interactions enhance nsp14 and nsp16 enzymatic activities. As to quaternary structure, interacts with nsp7 and nsp8 to form the replication-transcription complex (RTC): nsp12, nsp7, two subunits of nsp8, and up to two subunits of nsp13. Interacts with nsp9. In terms of assembly, interacts with nsp8 to form the replication-transcription complex (RTC): nsp12, nsp7, two subunits of nsp8, and up to two subunits of nsp13. It depends on Mn(2+) as a cofactor. Requires Mg(2+) as cofactor. In terms of processing, specific enzymatic cleavages in vivo by its own proteases yield mature proteins. 3CL-PRO and PL-PRO proteinases are autocatalytically processed.

The protein localises to the host membrane. It is found in the host cytoplasm. The protein resides in the host perinuclear region. Its subcellular location is the host endoplasmic reticulum-Golgi intermediate compartment. The enzyme catalyses RNA(n) + a ribonucleoside 5'-triphosphate = RNA(n+1) + diphosphate. The catalysed reaction is ATP + H2O = ADP + phosphate + H(+). It carries out the reaction Thiol-dependent hydrolysis of ester, thioester, amide, peptide and isopeptide bonds formed by the C-terminal Gly of ubiquitin (a 76-residue protein attached to proteins as an intracellular targeting signal).. It catalyses the reaction a 5'-end (N(7)-methyl 5'-triphosphoguanosine)-ribonucleoside in mRNA + S-adenosyl-L-methionine = a 5'-end (N(7)-methyl 5'-triphosphoguanosine)-(2'-O-methyl-ribonucleoside) in mRNA + S-adenosyl-L-homocysteine + H(+). The enzyme catalyses uridylyl-uridylyl-ribonucleotide-RNA = a 3'-end uridylyl-2',3'-cyclophospho-uridine-RNA + a 5'-end dephospho-ribonucleoside-RNA. The catalysed reaction is a 5'-end diphospho-ribonucleoside in mRNA + GTP + H(+) = a 5'-end (5'-triphosphoguanosine)-ribonucleoside in mRNA + diphosphate. It carries out the reaction a 5'-end (5'-triphosphoguanosine)-ribonucleoside in mRNA + S-adenosyl-L-methionine = a 5'-end (N(7)-methyl 5'-triphosphoguanosine)-ribonucleoside in mRNA + S-adenosyl-L-homocysteine. Its function is as follows. The replicase polyprotein of coronaviruses is a multifunctional protein: it contains the activities necessary for the transcription of negative stranded RNA, leader RNA, subgenomic mRNAs and progeny virion RNA as well as proteinases responsible for the cleavage of the polyprotein into functional products. Functionally, inhibits host translation by interacting with the 40S ribosomal subunit. The nsp1-40S ribosome complex further induces an endonucleolytic cleavage near the 5'UTR of host mRNAs, targeting them for degradation. Viral mRNAs are not susceptible to nsp1-mediated endonucleolytic RNA cleavage thanks to the presence of a 5'-end leader sequence and are therefore protected from degradation. By suppressing host gene expression, nsp1 facilitates efficient viral gene expression in infected cells and evasion from host immune response. May play a role in the modulation of host cell survival signaling pathway by interacting with host PHB and PHB2. Indeed, these two proteins play a role in maintaining the functional integrity of the mitochondria and protecting cells from various stresses. In terms of biological role, responsible for the cleavages located at the N-terminus of the replicase polyprotein. In addition, PL-PRO possesses a deubiquitinating/deISGylating activity and processes both 'Lys-48'- and 'Lys-63'-linked polyubiquitin chains from cellular substrates. Participates together with nsp4 in the assembly of virally-induced cytoplasmic double-membrane vesicles necessary for viral replication. Antagonizes innate immune induction of type I interferon by blocking the phosphorylation, dimerization and subsequent nuclear translocation of host IRF3. Also prevents host NF-kappa-B signaling. Its function is as follows. Participates in the assembly of virally-induced cytoplasmic double-membrane vesicles necessary for viral replication. Functionally, cleaves the C-terminus of replicase polyprotein at 11 sites. Recognizes substrates containing the core sequence [ILMVF]-Q-|-[SGACN]. Also able to bind an ADP-ribose-1''-phosphate (ADRP). Plays a role in the initial induction of autophagosomes from host endoplasmic reticulum. Later, limits the expansion of these phagosomes that are no longer able to deliver viral components to lysosomes. In terms of biological role, forms a hexadecamer with nsp8 (8 subunits of each) that may participate in viral replication by acting as a primase. Alternatively, may synthesize substantially longer products than oligonucleotide primers. Its function is as follows. Forms a hexadecamer with nsp7 (8 subunits of each) that may participate in viral replication by acting as a primase. Alternatively, may synthesize substantially longer products than oligonucleotide primers. Functionally, forms a primer, NSP9-pU, which is utilized by the polymerase for the initiation of RNA chains. Interacts with ribosome signal recognition particle RNA (SRP). Together with NSP8, suppress protein integration into the cell membrane, thereby disrupting host immune defenses. Plays a pivotal role in viral transcription by stimulating both nsp14 3'-5' exoribonuclease and nsp16 2'-O-methyltransferase activities. Therefore plays an essential role in viral mRNAs cap methylation. In terms of biological role, RNA-directed RNA polymerase that catalyzes the transcription of viral genomic and subgenomic RNAs. Acts in complex with nsp7 and nsp8 to transcribe both the minus and positive strands of genomic RNA. The kinase-like NiRAN domain of NSP12 attaches one or more nucleotides to the amino terminus of NSP9, forming a covalent RNA-protein intermediate that serves as transcription/replication primer. Subgenomic RNAs (sgRNAs) are formed by discontinuous transcription: The polymerase has the ability to pause at transcription-regulating sequences (TRS) and jump to the leader TRS, resulting in a major deletion. This creates a series of subgenomic RNAs that are replicated, transcribed and translated. In addition, Nsp12 is a subunit of the viral RNA capping enzyme that catalyzes the RNA guanylyltransferase reaction for genomic and sub-genomic RNAs. Subsequently, the NiRAN domain transfers RNA to GDP, and forms the core cap structure GpppA-RNA. Its function is as follows. Multi-functional protein with a zinc-binding domain in N-terminus displaying RNA and DNA duplex-unwinding activities with 5' to 3' polarity. Activity of helicase is dependent on magnesium. Functionally, plays a role in viral RNA synthesis through two distinct activities. The N7-guanine methyltransferase activity plays a role in the formation of the cap structure GpppA-RNA. The proofreading exoribonuclease reduces the sensitivity of the virus to RNA mutagens during replication. This activity acts on both ssRNA and dsRNA in a 3'-5' direction. Plays a role in viral transcription/replication and prevents the simultaneous activation of host cell dsRNA sensors, such as MDA5/IFIH1, OAS, and PKR. Acts by degrading the 5'-polyuridines generated during replication of the poly(A) region of viral genomic and subgenomic RNAs. Catalyzes a two-step reaction in which a 2'3'-cyclic phosphate (2'3'-cP) is first generated by 2'-O transesterification, which is then hydrolyzed to a 3'-phosphate (3'-P). If not degraded, poly(U) RNA would hybridize with poly(A) RNA tails and activate host dsRNA sensors. In terms of biological role, methyltransferase that mediates mRNA cap 2'-O-ribose methylation to the 5'-cap structure of viral mRNAs. N7-methyl guanosine cap is a prerequisite for binding of nsp16. Therefore plays an essential role in viral mRNAs cap methylation which is essential to evade immune system. This is Replicase polyprotein 1ab (rep) from Rhinolophus ferrumequinum (Greater horseshoe bat).